The primary structure comprises 66 residues: MAKSKNSTNKNQISKSHRNGIKKPKDHRHISTKGVNPRFLRNRRRAIKNDPSIKKSKNLEKKVNKE.

Residues 1–14 show a composition bias toward polar residues; the sequence is MAKSKNSTNKNQIS. The disordered stretch occupies residues 1–66; the sequence is MAKSKNSTNK…KNLEKKVNKE (66 aa). The segment covering 15–31 has biased composition (basic residues); sequence KSHRNGIKKPKDHRHIS. Residues 47 to 66 show a composition bias toward basic and acidic residues; that stretch reads IKNDPSIKKSKNLEKKVNKE.

Belongs to the eukaryotic ribosomal protein eL29 family.

It localises to the cytoplasm. The chain is Large ribosomal subunit protein eL29 (RPL29) from Tetrahymena thermophila.